Reading from the N-terminus, the 1081-residue chain is Inversin (1081 aa).

16 ANK repeats span residues 13 to 42 (SLAS…ALKD), 47 to 76 (FGRT…DVNK), 80 to 110 (SQRT…WMQK), 113 to 144 (EEMT…EVDT), 148 to 177 (NKQT…NIGI), 181 to 213 (EGKI…TESL), 220 to 250 (EGRT…NITS), 254 to 283 (LFRT…SGTI), 288 to 317 (QGAT…VKDD), 321 to 350 (EGRT…DIDI), 356 to 385 (YGGT…QVDA), 389 to 418 (MKHT…RVDL), 422 to 451 (DGHS…NPNV), 455 to 484 (AGRT…DPNI), 488 to 517 (EGRT…FPNQ), and 523 to 553 (ERYT…SIAA). Residue asparagine 75 is modified to 3-hydroxyasparagine. A D-box 1 motif is present at residues 490 to 498 (RTALHWSCN). The IQ 1 domain maps to 555–584 (QDIAAFKIQAVYKGYKVRKAFRDRKNLLMK). Residues 589–610 (RKDAAAKKREEENKRREAEQQK) show a composition bias toward basic and acidic residues. The tract at residues 589 to 889 (RKDAAAKKRE…PAPGPLSGQS (301 aa)) is disordered. Positions 638–649 (RAPSKQPPSSEA) are enriched in polar residues. 3 stretches are compositionally biased toward basic and acidic residues: residues 688–698 (KPNESPREQCK), 724–740 (EKSR…DKGK), and 772–785 (DGHR…DTAS). Polar residues predominate over residues 863–872 (SGTSTLSEDA). The D-box 2 signature appears at 910–918 (RKELFRKKN). The IQ 2 domain occupies 917–946 (KNKAAAVIQRAWRSYQLRKHLSHLLHMKEL). Residues 1022–1050 (RTHSVLHLNSVSNLQCIHLLENSGRSKNF) form an ANK 17 repeat. The segment covering 1051–1061 (SYNLQSATPPK) has biased composition (polar residues). A disordered region spans residues 1051 to 1081 (SYNLQSATPPKTKTKLRPSLEEECVRGSWNS).

As to quaternary structure, binds calmodulin via its IQ domains. Interacts with APC2. Interacts with alpha-, beta-, and gamma-catenin. Interacts with N-cadherin (CDH2). Interacts with NPHP1. Interacts with DVL1, PRICKLE (PRICKLE1 or PRICKLE2) and Strabismus (VANGL1 or VANGL2). Component of a complex containing at least ANKS6, INVS, NEK8 and NPHP3. ANKS6 may organize complex assembly by linking INVS and NPHP3 to NEK8 and INVS may target the complex to the proximal ciliary axoneme. Interacts with IQCB1; the interaction likely requires additional interactors. Interacts with microtubules. May be ubiquitinated via its interaction with APC2. Post-translationally, hydroxylated at Asn-75, most probably by HIF1AN.

It is found in the cytoplasm. Its subcellular location is the cytoskeleton. It localises to the membrane. The protein localises to the spindle. The protein resides in the nucleus. In terms of biological role, required for normal renal development and establishment of left-right axis. Probably acts as a molecular switch between different Wnt signaling pathways. Inhibits the canonical Wnt pathway by targeting cytoplasmic disheveled (DVL1) for degradation by the ubiquitin-proteasome. This suggests that it is required in renal development to oppose the repression of terminal differentiation of tubular epithelial cells by Wnt signaling. Involved in the organization of apical junctions in kidney cells together with NPHP1, NPHP4 and RPGRIP1L/NPHP8. Does not seem to be strictly required for ciliogenesis. The polypeptide is Inversin (INVS) (Canis lupus familiaris (Dog)).